Consider the following 385-residue polypeptide: Cell division protein FtsZ (385 aa).

GTP contacts are provided by residues 37 to 41 (GGGSN), 125 to 127 (GTG), E156, K160, and D204.

This sequence belongs to the FtsZ family. In terms of assembly, homodimer. Polymerizes to form a dynamic ring structure in a strictly GTP-dependent manner. Interacts directly with several other division proteins.

It is found in the cytoplasm. Functionally, essential cell division protein that forms a contractile ring structure (Z ring) at the future cell division site. The regulation of the ring assembly controls the timing and the location of cell division. One of the functions of the FtsZ ring is to recruit other cell division proteins to the septum to produce a new cell wall between the dividing cells. Binds GTP and shows GTPase activity. The sequence is that of Cell division protein FtsZ from Helicobacter pylori (strain ATCC 700392 / 26695) (Campylobacter pylori).